The following is a 350-amino-acid chain: Galactokinase (350 aa).

Substrate is bound at residue 14-17 (EHTD). ATP-binding positions include Ser46 and 96–102 (GAGLSSS). Mg(2+) is bound by residues Ser102 and Glu134. Asp146 (proton acceptor) is an active-site residue. Residue Tyr196 participates in substrate binding.

This sequence belongs to the GHMP kinase family. GalK subfamily.

It is found in the cytoplasm. It carries out the reaction alpha-D-galactose + ATP = alpha-D-galactose 1-phosphate + ADP + H(+). The protein operates within carbohydrate metabolism; galactose metabolism. Functionally, catalyzes the transfer of the gamma-phosphate of ATP to D-galactose to form alpha-D-galactose-1-phosphate (Gal-1-P). The polypeptide is Galactokinase (Thermotoga neapolitana (strain ATCC 49049 / DSM 4359 / NBRC 107923 / NS-E)).